A 263-amino-acid polypeptide reads, in one-letter code: H-2 class II histocompatibility antigen, A-S beta chain (263 aa).

The first 27 residues, 1–27 (MALQIPSLLLSAAVVVLMVLSSPGTEG), serve as a signal peptide directing secretion. The beta-1 stretch occupies residues 28–120 (GDSERHFVFQ…VETHTSLRRL (93 aa)). The Extracellular portion of the chain corresponds to 28–224 (GDSERHFVFQ…RAQSESARSK (197 aa)). 2 disulfides stabilise this stretch: Cys42/Cys104 and Cys143/Cys199. N-linked (GlcNAc...) asparagine glycosylation occurs at Asn46. Residues 121–214 (EQPNVVISLS…SLKSPITVEW (94 aa)) form a beta-2 region. Positions 123–211 (PNVVISLSRT…EHPSLKSPIT (89 aa)) constitute an Ig-like C1-type domain. Residues 215–224 (RAQSESARSK) are connecting peptide. A helical membrane pass occupies residues 225–245 (MLSGIGGCVLGVIFLGLGLFI). Residues 246 to 263 (RHRSQKGPRGPPPAGLLQ) lie on the Cytoplasmic side of the membrane.

The protein belongs to the MHC class II family. Post-translationally, ubiquitinated in immature dendritic cells leading to down-regulation of MHC class II.

The protein localises to the membrane. The polypeptide is H-2 class II histocompatibility antigen, A-S beta chain (H2-Ab1) (Mus musculus (Mouse)).